The primary structure comprises 441 residues: RUN domain-containing protein 3A (441 aa).

The segment at 1-293 (MEASFVQTTM…LQLQLEEAAA (293 aa)) is interaction with RAP2A. Residues 52–184 (DDSSEEFVNF…IDFSFCLKGE (133 aa)) form the RUN domain. Threonine 210 bears the Phosphothreonine mark. A disordered region spans residues 211 to 234 (DEEERHSAESSTSEDNSPEHPYLP). A Phosphoserine modification is found at serine 227. Residues 262-317 (YLEELVRLRESQLKDLEAENRRLQLQLEEAAAQNQREKRELEGVILELQEQLTGLI) are a coiled coil. Residues 367 to 379 (PLSAEASLSSDSQ) are compositionally biased toward polar residues. The interval 367–399 (PLSAEASLSSDSQRLGEGKRDEEPWGPIGKDPT) is disordered. The span at 380-389 (RLGEGKRDEE) shows a compositional bias: basic and acidic residues. A phosphoserine mark is found at serine 411 and serine 414.

The protein belongs to the RUNDC3 family. As to quaternary structure, interacts with the GTP-bound form of RAP2A.

Functionally, may act as an effector of RAP2A in neuronal cells. The sequence is that of RUN domain-containing protein 3A (RUNDC3A) from Bos taurus (Bovine).